A 185-amino-acid polypeptide reads, in one-letter code: Dual-action ribosomal maturation protein DarP (185 aa).

The segment at 1–22 is disordered; that stretch reads MWKNGAMRGCNKETGEFLGPSR.

Belongs to the DarP family.

It is found in the cytoplasm. Member of a network of 50S ribosomal subunit biogenesis factors which assembles along the 30S-50S interface, preventing incorrect 23S rRNA structures from forming. Promotes peptidyl transferase center (PTC) maturation. This chain is Dual-action ribosomal maturation protein DarP, found in Xylella fastidiosa (strain 9a5c).